Consider the following 363-residue polypeptide: Putative glutamate--cysteine ligase 2-3 (363 aa).

This sequence belongs to the glutamate--cysteine ligase type 2 family. YbdK subfamily.

The catalysed reaction is L-cysteine + L-glutamate + ATP = gamma-L-glutamyl-L-cysteine + ADP + phosphate + H(+). Its function is as follows. ATP-dependent carboxylate-amine ligase which exhibits weak glutamate--cysteine ligase activity. This Rubrobacter xylanophilus (strain DSM 9941 / JCM 11954 / NBRC 16129 / PRD-1) protein is Putative glutamate--cysteine ligase 2-3.